We begin with the raw amino-acid sequence, 306 residues long: Protoheme IX farnesyltransferase (306 aa).

A run of 9 helical transmembrane segments spans residues 32-52, 58-78, 103-123, 126-146, 153-173, 180-200, 227-247, 249-269, and 278-298; these read VVAL…PGAL, IPAM…NHIV, NAIV…YALV, LTAF…TMYL, NITI…TAMT, ALLL…ALAI, ILLY…VGMS, WLYL…AWQL, and AMAT…ILLL.

It belongs to the UbiA prenyltransferase family. Protoheme IX farnesyltransferase subfamily.

The protein resides in the cell inner membrane. It carries out the reaction heme b + (2E,6E)-farnesyl diphosphate + H2O = Fe(II)-heme o + diphosphate. It participates in porphyrin-containing compound metabolism; heme O biosynthesis; heme O from protoheme: step 1/1. Its function is as follows. Converts heme B (protoheme IX) to heme O by substitution of the vinyl group on carbon 2 of heme B porphyrin ring with a hydroxyethyl farnesyl side group. The sequence is that of Protoheme IX farnesyltransferase from Colwellia psychrerythraea (strain 34H / ATCC BAA-681) (Vibrio psychroerythus).